Consider the following 537-residue polypeptide: Putative cysteine ligase BshC (537 aa).

It belongs to the BshC family.

Its function is as follows. Involved in bacillithiol (BSH) biosynthesis. May catalyze the last step of the pathway, the addition of cysteine to glucosamine malate (GlcN-Mal) to generate BSH. In Staphylococcus saprophyticus subsp. saprophyticus (strain ATCC 15305 / DSM 20229 / NCIMB 8711 / NCTC 7292 / S-41), this protein is Putative cysteine ligase BshC.